Consider the following 1682-residue polypeptide: 1-phosphatidylinositol 4,5-bisphosphate phosphodiesterase eta-1 (1682 aa).

Residues 20–128 enclose the PH domain; sequence SVMQSGTQMI…WITGLKYLMA (109 aa). 3 EF-hand domains span residues 142–177, 178–214, and 226–246; these read THDQWVKQTFEEADKNGDGLLNIEEIHQLMHKLNVN, LPRRKVRQMFQEADTDENQGTLTFEEFCVFYKMMSLR, and DKKDHLTVEELAQFLKVEQKM. Residues D155, N157, D159, and E166 each contribute to the Ca(2+) site. Positions 299 to 444 constitute a PI-PLC X-box domain; sequence QDMDQPLCNY…LKGKILVKGK (146 aa). H314 is a catalytic residue. 3 residues coordinate Ca(2+): N315, E344, and D346. H358 is an active-site residue. E393 is a Ca(2+) binding site. K442 and K444 together coordinate substrate. A disordered region spans residues 534-588; sequence LDVKESGKKSHGRSLMANFGKHKQKATKSRSKSYSTDDEDDSLQNPGKEGGQLYR. Residues 553 to 564 are compositionally biased toward basic residues; sequence GKHKQKATKSRS. Residues 602-715 form the PI-PLC Y-box domain; that stretch reads LSDLVVYTNS…GYILKPQQMC (114 aa). Residues S628 and R655 each coordinate substrate. Positions 716–844 constitute a C2 domain; that stretch reads KGTFNPFSGD…PGYRHVYLEG (129 aa). Ca(2+) contacts are provided by I759, D761, D785, D814, H815, and D816. Residues 992–1018 show a composition bias toward basic and acidic residues; the sequence is DTDGKENCLAGDKDDRRKGAATRKDPH. Disordered stretches follow at residues 992–1083, 1296–1321, and 1581–1603; these read DTDG…LSPR, NLPGFPDASPGQFPKSPTHGEDHSQV, and RAKEKQEAGKQKAMAQSTRGGVV. A compositionally biased stretch (low complexity) spans 1019–1033; sequence FSNFNKKLSSSSSAL. Polar residues-rich tracts occupy residues 1040 to 1050 and 1065 to 1074; these read QGPTASVSNPE and NMTNDCQENH. Positions 1581 to 1590 are enriched in basic and acidic residues; that stretch reads RAKEKQEAGK.

Ca(2+) serves as cofactor. In terms of tissue distribution, expressed in brain and to a lower extent in lung. In brain, it is found in cerebrum, cerebellum and spinal cord.

It is found in the cytoplasm. The protein localises to the membrane. The enzyme catalyses a 1,2-diacyl-sn-glycero-3-phospho-(1D-myo-inositol-4,5-bisphosphate) + H2O = 1D-myo-inositol 1,4,5-trisphosphate + a 1,2-diacyl-sn-glycerol + H(+). Its function is as follows. The production of the second messenger molecules diacylglycerol (DAG) and inositol 1,4,5-trisphosphate (IP3) is mediated by calcium-activated phosphatidylinositol-specific phospholipase C enzymes. This chain is 1-phosphatidylinositol 4,5-bisphosphate phosphodiesterase eta-1, found in Mus musculus (Mouse).